Consider the following 2832-residue polypeptide: Cyclic beta-(1,2)-glucan synthase NdvB (2832 aa).

A run of 7 helical transmembrane segments spans residues Phe-411 to Phe-431, Ile-444 to Val-464, Leu-810 to Pro-830, Ala-831 to Ile-851, Gln-880 to Val-900, Trp-938 to Leu-958, and Pro-959 to Val-979. In terms of domain architecture, Glycoamylase-like spans Leu-1299–Ala-1506.

The protein belongs to the NdvB family.

The protein resides in the cell inner membrane. The catalysed reaction is [(1-&gt;2)-beta-D-glucosyl](n) + UDP-alpha-D-glucose = [(1-&gt;2)-beta-D-glucosyl](n+1) + UDP + H(+). Its function is as follows. Involved in the biosynthesis of cyclic beta-(1,2)-glucan. It seems that NdvB is involved in three enzymatic activities. First, it may catalyze the transfer of the first glucose from UDP-Glc to an unknown amino acid. In the second enzymatic activity (UDP-Glc:beta-(1,2) oligosaccharide glucosyltransferase), it may be responsible for chain elongation. Finally, in the third activity, it may catalyze glucan cyclization and release from the protein. NdvB is also involved in nodule invasion and in bacteroid development. The protein is Cyclic beta-(1,2)-glucan synthase NdvB of Rhizobium meliloti (strain 1021) (Ensifer meliloti).